The primary structure comprises 319 residues: Acetyl-coenzyme A carboxylase carboxyl transferase subunit alpha (319 aa).

A CoA carboxyltransferase C-terminal domain is found at 35–296; it reads DLDKEIEQLE…KATLLRQLAE (262 aa).

The protein belongs to the AccA family. As to quaternary structure, acetyl-CoA carboxylase is a heterohexamer composed of biotin carboxyl carrier protein (AccB), biotin carboxylase (AccC) and two subunits each of ACCase subunit alpha (AccA) and ACCase subunit beta (AccD).

The protein localises to the cytoplasm. The enzyme catalyses N(6)-carboxybiotinyl-L-lysyl-[protein] + acetyl-CoA = N(6)-biotinyl-L-lysyl-[protein] + malonyl-CoA. It participates in lipid metabolism; malonyl-CoA biosynthesis; malonyl-CoA from acetyl-CoA: step 1/1. Component of the acetyl coenzyme A carboxylase (ACC) complex. First, biotin carboxylase catalyzes the carboxylation of biotin on its carrier protein (BCCP) and then the CO(2) group is transferred by the carboxyltransferase to acetyl-CoA to form malonyl-CoA. The chain is Acetyl-coenzyme A carboxylase carboxyl transferase subunit alpha from Vibrio vulnificus (strain CMCP6).